The sequence spans 66 residues: Photosystem II reaction center protein J (66 aa).

Residues 36-56 (LWLVATAGGIAVIFVLGIFFY) form a helical membrane-spanning segment.

The protein belongs to the PsbJ family. As to quaternary structure, PSII is composed of 1 copy each of membrane proteins PsbA, PsbB, PsbC, PsbD, PsbE, PsbF, PsbH, PsbI, PsbJ, PsbK, PsbL, PsbM, PsbT, PsbX, PsbY, Psb30/Ycf12, peripheral proteins PsbO, CyanoQ (PsbQ), PsbU, PsbV and a large number of cofactors. It forms dimeric complexes.

Its subcellular location is the cellular thylakoid membrane. Functionally, one of the components of the core complex of photosystem II (PSII). PSII is a light-driven water:plastoquinone oxidoreductase that uses light energy to abstract electrons from H(2)O, generating O(2) and a proton gradient subsequently used for ATP formation. It consists of a core antenna complex that captures photons, and an electron transfer chain that converts photonic excitation into a charge separation. This is Photosystem II reaction center protein J from Prochlorococcus marinus (strain MIT 9215).